Consider the following 255-residue polypeptide: tRNA (guanine-N(1)-)-methyltransferase (255 aa).

Residues Gly113 and 133–138 (IGDYVL) contribute to the S-adenosyl-L-methionine site.

The protein belongs to the RNA methyltransferase TrmD family. Homodimer.

The protein localises to the cytoplasm. It catalyses the reaction guanosine(37) in tRNA + S-adenosyl-L-methionine = N(1)-methylguanosine(37) in tRNA + S-adenosyl-L-homocysteine + H(+). In terms of biological role, specifically methylates guanosine-37 in various tRNAs. The sequence is that of tRNA (guanine-N(1)-)-methyltransferase from Chloroflexus aggregans (strain MD-66 / DSM 9485).